The chain runs to 215 residues: V-type ATP synthase subunit D (215 aa).

The protein belongs to the V-ATPase D subunit family.

Functionally, produces ATP from ADP in the presence of a proton gradient across the membrane. This is V-type ATP synthase subunit D from Anaeromyxobacter sp. (strain Fw109-5).